A 199-amino-acid polypeptide reads, in one-letter code: Glycerol-3-phosphate acyltransferase (199 aa).

The next 5 helical transmembrane spans lie at 4-24 (FALFYMLFAYLLGSISSAILI), 56-76 (LAVLIFDMLKGMIPVWAGYYL), 80-100 (QFELGMVALGACLGHIFPIFF), 115-135 (IAPISWAVAGSMFGTWIFVFL), and 154-176 (YVWWFKPEFTFPVALVCCLLIYR).

The protein belongs to the PlsY family. Probably interacts with PlsX.

Its subcellular location is the cell inner membrane. It catalyses the reaction an acyl phosphate + sn-glycerol 3-phosphate = a 1-acyl-sn-glycero-3-phosphate + phosphate. It functions in the pathway lipid metabolism; phospholipid metabolism. Catalyzes the transfer of an acyl group from acyl-phosphate (acyl-PO(4)) to glycerol-3-phosphate (G3P) to form lysophosphatidic acid (LPA). This enzyme utilizes acyl-phosphate as fatty acyl donor, but not acyl-CoA or acyl-ACP. The sequence is that of Glycerol-3-phosphate acyltransferase from Haemophilus influenzae (strain PittGG).